A 257-amino-acid polypeptide reads, in one-letter code: Non-homologous end joining protein Ku (257 aa).

Residues 9-184 (TFGMVAIPIG…YTKPEVNEQE (176 aa)) enclose the Ku domain.

Belongs to the prokaryotic Ku family. Homodimer. Interacts with LigD.

With LigD forms a non-homologous end joining (NHEJ) DNA repair enzyme, which repairs dsDNA breaks with reduced fidelity. Binds linear dsDNA with 5'- and 3'- overhangs but not closed circular dsDNA nor ssDNA. Recruits and stimulates the ligase activity of LigD. This is Non-homologous end joining protein Ku from Lachnoclostridium phytofermentans (strain ATCC 700394 / DSM 18823 / ISDg) (Clostridium phytofermentans).